The primary structure comprises 149 residues: Stathmin (149 aa).

An N-acetylalanine modification is found at Ala-2. At Ser-4 the chain carries Phosphoserine. One can recognise an SLD domain in the interval 4-145 (SDIQVKELEK…NKESKDPADE (142 aa)). Lys-9 carries the N6-acetyllysine modification. Position 16 is a phosphoserine; by PKA (Ser-16). Ser-25 is subject to Phosphoserine; by CDK1, MAPK1 and MAPK3. The interval 27 to 46 (RSKESVPDFPLSPPKKKDLS) is disordered. The residue at position 29 (Lys-29) is an N6-methyllysine. At Ser-31 the chain carries Phosphoserine. Ser-38 is subject to Phosphoserine; by CDK1, MAPK1 and MAPK3. Positions 41–140 (KKKDLSLEEI…EEVRKNKESK (100 aa)) form a coiled coil. Ser-63 carries the phosphoserine; by PKA modification. Residues Lys-100 and Lys-119 each carry the N6-acetyllysine modification. Positions 104-143 (KMEANKENREAQMAAKLERLREKDKHVEEVRKNKESKDPA) are enriched in basic and acidic residues. The disordered stretch occupies residues 104–149 (KMEANKENREAQMAAKLERLREKDKHVEEVRKNKESKDPADETEAD).

The protein belongs to the stathmin family. Binds to two alpha/beta-tubulin heterodimers. Interacts with KIST. In terms of processing, many different phosphorylated forms are observed depending on specific combinations among the sites which can be phosphorylated. MAPK is responsible for the phosphorylation of stathmin in response to NGF. Phosphorylation at Ser-16 seems to be required for neuron polarization. As to expression, highly expressed in the lateral nucleus of the amygdala.

The protein localises to the cytoplasm. The protein resides in the cytoskeleton. Functionally, involved in the regulation of the microtubule (MT) filament system by destabilizing microtubules. Prevents assembly and promotes disassembly of microtubules. Phosphorylation at Ser-16 may be required for axon formation during neurogenesis. Involved in the control of the learned and innate fear. This is Stathmin (Stmn1) from Mus musculus (Mouse).